The following is a 759-amino-acid chain: Tripartite motif-containing protein 46 (759 aa).

The segment at 1–166 (MAEGEDMQTF…VERYRQSVSV (166 aa)) is required for proximal axon localization, axon formation and migration. The segment at 33-59 (CPVCQEMYKQPLVLPCTHNVCQACARE) adopts an RING-type 1; degenerate zinc-finger fold. The disordered stretch occupies residues 67–98 (IGHGGDPSSEPTSPASTPSTRSPRLSRRTLPK). Over residues 73-89 (PSSEPTSPASTPSTRSP) the composition is skewed to low complexity. Residues 172 to 231 (CQLCKPPPLEATKGCTECRATFCNECFKLFHPWGTQKAQHEPTLPTLSFRPKGLMCPDHK) form an RING-type 2; degenerate zinc finger. The segment at 222–263 (PKGLMCPDHKEEVTHYCKTCQRLVCQLCRVRRTHSGHKITPV) adopts a B box-type zinc-finger fold. Zn(2+) is bound by residues cysteine 227, histidine 230, cysteine 249, and histidine 255. A coiled-coil region spans residues 322-400 (AVLEEKRASL…RATEALQTFR (79 aa)). Residue serine 330 is modified to Phosphoserine. One can recognise a COS domain in the interval 370–427 (LKETDQPCFVQAAKQLHNRIARATEALQTFRPAASSSFRHCQLDVGREMKLLTELSFL). A required for microtubule association, proximal axon localization and axon formation region spans residues 411–429 (QLDVGREMKLLTELSFLRV). Positions 429 to 528 (VPEAPVIDTQ…EDVHLHTPPA (100 aa)) constitute a Fibronectin type-III domain. The B30.2/SPRY domain maps to 526-747 (PPAPVLHFFL…LQEPVGTKPE (222 aa)). Serine 627 carries the post-translational modification Phosphoserine.

The protein belongs to the TRIM/RBCC family. As to quaternary structure, interacts with TUBB3 and TUBA4A. In terms of tissue distribution, expressed in the central nervous system, including pyramidal neurons and interneurons in the cortex and hippocampus and all neuronal cell types in the cerebral and cerebellar cortex, and in the peripheral nervous system, including the dorsal root ganglion neurons.

The protein resides in the cell projection. The protein localises to the axon. Its subcellular location is the cytoplasm. It is found in the cytoskeleton. Functionally, microtubule-associated protein that is involved in the formation of parallel microtubule bundles linked by cross-bridges in the proximal axon. Required for the uniform orientation and maintenance of the parallel microtubule fascicles, which are important for efficient cargo delivery and trafficking in axons. Thereby also required for proper axon formation, the establishment of neuronal polarity and proper neuronal migration. The polypeptide is Tripartite motif-containing protein 46 (Trim46) (Mus musculus (Mouse)).